We begin with the raw amino-acid sequence, 485 residues long: Glutamyl-tRNA(Gln) amidotransferase subunit A (485 aa).

Active-site charge relay system residues include lysine 79 and serine 154. The active-site Acyl-ester intermediate is serine 178.

This sequence belongs to the amidase family. GatA subfamily. Heterotrimer of A, B and C subunits.

The catalysed reaction is L-glutamyl-tRNA(Gln) + L-glutamine + ATP + H2O = L-glutaminyl-tRNA(Gln) + L-glutamate + ADP + phosphate + H(+). Functionally, allows the formation of correctly charged Gln-tRNA(Gln) through the transamidation of misacylated Glu-tRNA(Gln) in organisms which lack glutaminyl-tRNA synthetase. The reaction takes place in the presence of glutamine and ATP through an activated gamma-phospho-Glu-tRNA(Gln). The polypeptide is Glutamyl-tRNA(Gln) amidotransferase subunit A (Clostridium botulinum (strain Alaska E43 / Type E3)).